The chain runs to 92 residues: Neuropeptide ShK-like2 (92 aa).

The N-terminal stretch at 1–23 (MTTIRCVLFAVLLFAYCALLIKA) is a signal peptide. Residues 24–51 (RSIDAEAEKTWQEEETKTVAEKSPLKKR) constitute a propeptide that is removed on maturation. Cystine bridges form between Cys53-Cys92, Cys61-Cys85, and Cys70-Cys89.

Transcripts are first expressed mostly in the endoderm (with rare ectodermal cells) in the late planulae. They are mostly expressed in endodermal ganglion cells in the body column and tentacles in primary polyps, as well as in a small number of ectodermal sensory neurons in tentacles and body wall. They are not expressed in nematocytes. As to expression, transcripts are predominantly expressed in ectodermal sensory neurons in early and late planulae. They are expressed in endodermal ganglion cells in the body column and tentacles in primary polyps, as well as in a small number of ectodermal neurons in pharynx. They are not expressed in nematocytes.

In terms of biological role, in vivo, this neuropeptide induces contraction paralysis followed by death (within 2 hours) on 4 zebrafish larvae on the 15 tested. Also induces body contraction in Nematostella 11-dpf polyps. This chain is Neuropeptide ShK-like2, found in Nematostella vectensis (Starlet sea anemone).